We begin with the raw amino-acid sequence, 39 residues long: Cygnin (39 aa).

Gln1 is modified (pyrrolidone carboxylic acid). 3 disulfide bridges follow: Cys6-Cys33, Cys12-Cys28, and Cys16-Cys32.

Belongs to the transferrin family.

The chain is Cygnin from Cygnus atratus (Black swan).